We begin with the raw amino-acid sequence, 1374 residues long: F-actin-uncapping protein LRRC16A (1374 aa).

N-acetylmethionine is present on Met1. A Phosphoserine modification is found at Ser122. LRR repeat units follow at residues 245 to 269 (SNRLEELVLENAGLRIDFAQKLAGA), 275 to 298 (NSGLHTINLAGNSLEDRGVSSLSI), 304 to 327 (PKGLKHLNLSKTSLSPKGVNSLCQ), 336 to 363 (ASTLTHLDLSGNALRGDDLSHMYNFLAQ), 391 to 418 (LQCLAVLNLSRSVFSHRKGKEVPPSFKQ), 423 to 447 (SLALIQINLSGTKLSPEPLKALLLG), 485 to 510 (IHNITSLDISDNGLESDLSTLIVWLS), 547 to 570 (DSPLQSLSLADSKLKAEVTIIINA), 574 to 597 (NTSLTKVDISGNGMGDMGAKMLAK), and 658 to 682 (LQKIENYLLRNHETRKYLQEQAYRL). The stretch at 714–738 (GDAIQEDLKAAERLMRDAKNSKTLL) forms a coiled coil. Phosphothreonine is present on Thr920. Disordered stretches follow at residues 961–982 (PFPSVRQEKRSSGLISELPSEE) and 1040–1374 (KMDC…FIFV). An LRR 11 repeat occupies 962–985 (FPSVRQEKRSSGLISELPSEEGRR). The interval 962–1084 (FPSVRQEKRS…LIKSRSRSER (123 aa)) is inhibits capping activity of CP. Ser972 carries the post-translational modification Phosphoserine. Residues 1040-1064 (KMDCKRSSSRSSDAHELGEGDEKKK) are compositionally biased toward basic and acidic residues. A necessary for localization at the cell membrane region spans residues 1058–1092 (EGDEKKKRDSRRSGFLNLIKSRSRSERPPTVLMTE). Ser1096 bears the Phosphoserine mark. 2 stretches are compositionally biased toward basic and acidic residues: residues 1108–1132 (TTRKEIKAAEHNGAPDRTEEIKTPE) and 1141–1150 (EAGRAERSDS). Residues 1191 to 1204 (VISQDPSSPVSCNT) show a composition bias toward polar residues. Position 1229 is a phosphothreonine (Thr1229). Positions 1232-1244 (KNAKAEPRVDGGC) are enriched in basic and acidic residues. Residues 1245–1263 (RSRSSSSMPTSPKPLLQSP) show a composition bias toward low complexity. Ser1281, Ser1289, Ser1291, Ser1295, Ser1319, Ser1328, and Ser1335 each carry phosphoserine. The segment covering 1317 to 1330 (QNSSQSSPRSFSQE) has biased composition (low complexity). Over residues 1343 to 1356 (QEQKQRSSGKDGHQ) the composition is skewed to basic and acidic residues. Ser1363 is subject to Phosphoserine.

It belongs to the CARMIL family. In terms of assembly, homodimer. Interacts (via C-terminus) with heterodimeric capping protein (CP); this interaction uncaps barbed ends capped by CP, enhances barbed-end actin polymerization and promotes lamellipodial formation and cell migration. Interacts with MYO1E. Interacts with TRIO.

The protein localises to the cytoplasm. The protein resides in the cytoskeleton. It is found in the cell membrane. Its subcellular location is the cell projection. It localises to the lamellipodium. Cell membrane-cytoskeleton-associated protein that plays a role in the regulation of actin polymerization at the barbed end of actin filaments. Prevents F-actin heterodimeric capping protein (CP) activity at the leading edges of migrating cells, and hence generates uncapped barbed ends and enhances actin polymerization, however, seems unable to nucleate filaments. Plays a role in lamellipodial protrusion formations and cell migration. The sequence is that of F-actin-uncapping protein LRRC16A from Mus musculus (Mouse).